The primary structure comprises 455 residues: Epoxide hydrolase 1 (455 aa).

A helical; Signal-anchor for type III membrane protein transmembrane segment spans residues 1-21; sequence MWLEILLTSVLGFAIYWFISR. Over 22-455 the chain is Cytoplasmic; sequence DKEETLPLED…RKFLSVLERQ (434 aa). The active-site Nucleophile is Asp-226. Arg-295 bears the Dimethylated arginine mark. Tyr-374 serves as the catalytic Proton donor. The Proton acceptor role is filled by His-431.

This sequence belongs to the peptidase S33 family. As to expression, found in liver.

The protein resides in the microsome membrane. Its subcellular location is the endoplasmic reticulum membrane. The enzyme catalyses cis-stilbene oxide + H2O = (1R,2R)-hydrobenzoin. It catalyses the reaction 1-(4-methoxyphenyl)-N-methyl-N-[(3-methyloxetan-3-yl)methyl]methanamine + H2O = 2-{[(4-methoxybenzyl)(methyl)amino]methyl}-2-methylpropane-1,3-diol. It carries out the reaction 8,9-epoxy-(5Z,11Z,14Z)-eicosatrienoate + H2O = 8,9-dihydroxy-(5Z,11Z,14Z)-eicosatrienoate. The catalysed reaction is 11,12-epoxy-(5Z,8Z,14Z)-eicosatrienoate + H2O = 11,12-dihydroxy-(5Z,8Z,14Z)-eicosatrienoate. The enzyme catalyses 2-(5Z,8Z,11Z,14Z-eicosatetraenoyl)-glycerol + H2O = glycerol + (5Z,8Z,11Z,14Z)-eicosatetraenoate + H(+). With respect to regulation, inhibited by 10-hydroxystearamide and methoxy-arachidonyl fluorophosphate. In terms of biological role, biotransformation enzyme that catalyzes the hydrolysis of arene and aliphatic epoxides to less reactive and more water soluble dihydrodiols by the trans addition of water. Plays a role in the metabolism of endogenous lipids such as epoxide-containing fatty acids. Metabolizes the abundant endocannabinoid 2-arachidonoylglycerol (2-AG) to free arachidonic acid (AA) and glycerol. Binds 20(S)-hydroxycholesterol (20(S)-OHC). In Homo sapiens (Human), this protein is Epoxide hydrolase 1.